Here is a 392-residue protein sequence, read N- to C-terminus: Elongation factor Tu (392 aa).

Positions 10 to 202 constitute a tr-type G domain; the sequence is KVHVNVGTIG…VLDEYIEDPI (193 aa). The interval 19 to 26 is G1; the sequence is GHVDHGKT. 19–26 is a GTP binding site; sequence GHVDHGKT. A Mg(2+)-binding site is contributed by Thr26. Residues 60 to 64 are G2; sequence GITIN. The segment at 81–84 is G3; that stretch reads DCPG. Residues 81 to 85 and 136 to 139 each bind GTP; these read DCPGH and NKCD. The G4 stretch occupies residues 136 to 139; it reads NKCD. Positions 174–176 are G5; it reads SAL.

It belongs to the TRAFAC class translation factor GTPase superfamily. Classic translation factor GTPase family. EF-Tu/EF-1A subfamily. In terms of assembly, monomer.

Its subcellular location is the cytoplasm. It carries out the reaction GTP + H2O = GDP + phosphate + H(+). Functionally, GTP hydrolase that promotes the GTP-dependent binding of aminoacyl-tRNA to the A-site of ribosomes during protein biosynthesis. The sequence is that of Elongation factor Tu from Phytoplasma mali (strain AT).